The chain runs to 227 residues: (S)-2-haloacid dehalogenase (227 aa).

Aspartate 10 (nucleophile) is an active-site residue. An (S)-2-haloacid-binding positions include leucine 11–tyrosine 12, arginine 41, and serine 118–asparagine 119. An important for catalytic activity region spans residues serine 175–aspartate 180.

This sequence belongs to the HAD-like hydrolase superfamily. S-2-haloalkanoic acid dehalogenase family. Homotetramer.

It catalyses the reaction an (S)-2-haloacid + H2O = a (2R)-2-hydroxycarboxylate + a halide anion + H(+). The catalysed reaction is (S)-2-chloropropanoate + H2O = (R)-lactate + chloride + H(+). Catalyzes the hydrolytic dehalogenation of small (S)-2-haloalkanoic acids to yield the corresponding (R)-2-hydroxyalkanoic acids. Acts on acids of short chain lengths, C(2) to C(4), with inversion of configuration at C-2. Active with 2-halogenated carboxylic acids and converts only the S-isomer (or L-isomer) of 2-chloropropionic acid with inversion of configuration to produce R-lactate (or D-isomer). The polypeptide is (S)-2-haloacid dehalogenase (Pseudomonas putida (Arthrobacter siderocapsulatus)).